Here is a 420-residue protein sequence, read N- to C-terminus: Odorant receptor 63a (420 aa).

Over 1-43 (MYSPEEAAELKRRNYRSIREMIRLSYTVGFNLLDPSRCGQVLR) the chain is Cytoplasmic. Residues 44 to 64 (IWTIVLSVSSLASLYGHWQML) traverse the membrane as a helical segment. The Extracellular portion of the chain corresponds to 65 to 76 (ARYIHDIPRIGE). Residues 77 to 97 (TAGTALQFLTSIAKMWYFLFA) form a helical membrane-spanning segment. The Cytoplasmic segment spans residues 98 to 150 (HRQIYELLRKARCHELLQKCELFERMSDLPVIKEIRQQVESTMNRYWASTRRQ). The helical transmembrane segment at 151-171 (ILIYLYSCICITTNYFINSFV) threads the bilayer. Over 172 to 217 (INLYRYFTKPKGSYDIMLPLPSLYPAWEHKGLEFPYYHIQMYLETC) the chain is Extracellular. Residues 218 to 238 (SLYICGMCAVSFDGVFIVLCL) traverse the membrane as a helical segment. The Cytoplasmic segment spans residues 239-296 (HSVGLMRSLNQMVEQATSELVPPDRRVEYLRCCIYQYQRVANFATEVNNCFRHITFTQ). A helical transmembrane segment spans residues 297 to 317 (FLLSLFNWGLALFQMSVGLGN). Asn-318 carries an N-linked (GlcNAc...) asparagine glycan. At 318–320 (NSS) the chain is on the extracellular side. The chain crosses the membrane as a helical span at residues 321-341 (ITMIRMTMYLVAAGYQIVVYC). Over 342–387 (YNGQRFATASEEIANAFYQVRWYGESREFRHLIRMMLMRTNRGFRL) the chain is Cytoplasmic. The helical transmembrane segment at 388-408 (DVSWFMQMSLPTLMAMVRTSG) threads the bilayer. The Extracellular segment spans residues 409-420 (QYFLLLQNVNQK).

This sequence belongs to the insect chemoreceptor superfamily. Heteromeric odorant receptor channel (TC 1.A.69) family. Or63a subfamily. As to quaternary structure, interacts with Orco. Complexes exist early in the endomembrane system in olfactory sensory neurons (OSNs), coupling these complexes to the conserved ciliary trafficking pathway.

It is found in the cell membrane. Functionally, odorant receptor which mediates acceptance or avoidance behavior, depending on its substrates. The odorant receptor repertoire encodes a large collection of odor stimuli that vary widely in identity, intensity, and duration. May form a complex with Orco to form odorant-sensing units, providing sensitive and prolonged odorant signaling and calcium permeability. Involved in the behavioral responses to butyl acetate, isoamyl acetate, and hexanoic acid. This Drosophila melanogaster (Fruit fly) protein is Odorant receptor 63a (Or63a).